The primary structure comprises 142 residues: Large ribosomal subunit protein mL42 (142 aa).

Residues 1–32 constitute a mitochondrion transit peptide; sequence MAVAAVKWVMSKRTILKHLFPVQNGALYCVCH.

The protein belongs to the mitochondrion-specific ribosomal protein mL42 family. Component of the mitochondrial large ribosomal subunit (mt-LSU). Mature mammalian 55S mitochondrial ribosomes consist of a small (28S) and a large (39S) subunit. The 28S small subunit contains a 12S ribosomal RNA (12S mt-rRNA) and 30 different proteins. The 39S large subunit contains a 16S rRNA (16S mt-rRNA), a copy of mitochondrial valine transfer RNA (mt-tRNA(Val)), which plays an integral structural role, and 52 different proteins.

It is found in the mitochondrion. The protein is Large ribosomal subunit protein mL42 (MRPL42) of Homo sapiens (Human).